Here is a 332-residue protein sequence, read N- to C-terminus: Endo-1,4-beta-xylanase B (332 aa).

The GH10 domain maps to 2-331; it reads STEIPSLSAS…KDSFWRIIGQ (330 aa). Glutamate 134 (proton donor) is an active-site residue. The active-site Nucleophile is the glutamate 241.

Belongs to the glycosyl hydrolase 10 (cellulase F) family. Cytoplasmic xylanase subfamily.

It is found in the cytoplasm. It carries out the reaction Endohydrolysis of (1-&gt;4)-beta-D-xylosidic linkages in xylans.. It participates in glycan degradation; xylan degradation. Its activity is regulated as follows. Completely inhibited by Ag(2+), Cu(2+), Hg(2+), Mn(2+), Pb(2+) and Sn(2+). Strongly inhibited by Fe(2+) and Zn(2+). Co(2+) and Ni(2+) cause little inhibition while Ca(2+) and Mg(2+) do not affect enzyme activity, and Ba(2+) produces a small stimulating effect. Irreversibly inactivated by SDS in vitro. In terms of biological role, plays a role in plant xylan biodegradation, probably via the hydrolysis of short xylooligosaccharides resulting from extracellular xylan hydrolysis, once they have been transported inside cells. Shows similar activity on xylans of different rate of arabinose or methylglucuronic substitution. Also displays high activity on aryl-xylosides. Is active on xylotetraose and xylotriose, but does not hydrolyze xylobiose, indicating that XynB is a xylanase and not a beta-xylosidase. This is Endo-1,4-beta-xylanase B (xynB) from Paenibacillus barcinonensis.